The sequence spans 704 residues: Ion-translocating oxidoreductase complex subunit C (704 aa).

4Fe-4S ferredoxin-type domains are found at residues methionine 368–tyrosine 397 and lysine 407–phenylalanine 436. [4Fe-4S] cluster-binding residues include cysteine 377, cysteine 380, cysteine 383, cysteine 387, cysteine 416, cysteine 419, cysteine 422, and cysteine 426. The interval alanine 535–alanine 684 is disordered. Residues lysine 556–arginine 565 show a composition bias toward low complexity.

Belongs to the 4Fe4S bacterial-type ferredoxin family. RnfC subfamily. In terms of assembly, the complex is composed of six subunits: RsxA, RsxB, RsxC, RsxD, RsxE and RsxG. [4Fe-4S] cluster serves as cofactor.

Its subcellular location is the cell inner membrane. In terms of biological role, part of a membrane-bound complex that couples electron transfer with translocation of ions across the membrane. Required to maintain the reduced state of SoxR. This chain is Ion-translocating oxidoreductase complex subunit C, found in Salmonella paratyphi C (strain RKS4594).